We begin with the raw amino-acid sequence, 563 residues long: Probable CoA ligase CCL11 (563 aa).

ATP contacts are provided by residues 195–203, 328–333, aspartate 426, 438–441, and lysine 534; these read TSGTTSSPK, HGYGMT, and IKDR. An SBD1 region spans residues 263–328; that stretch reads DGEIIFNLIR…TESLGFVISH (66 aa). The SBD2 stretch occupies residues 329–405; that stretch reads GYGMTEMLGV…LKGSSIMLGY (77 aa).

The protein belongs to the ATP-dependent AMP-binding enzyme family.

The protein localises to the cytoplasm. It is found in the cytosol. The sequence is that of Probable CoA ligase CCL11 from Humulus lupulus (European hop).